The chain runs to 212 residues: Pyrrolidone-carboxylate peptidase (212 aa).

Active-site residues include glutamate 78, cysteine 141, and histidine 165.

Belongs to the peptidase C15 family. As to quaternary structure, homotetramer.

It localises to the cytoplasm. It catalyses the reaction Release of an N-terminal pyroglutamyl group from a polypeptide, the second amino acid generally not being Pro.. Its function is as follows. Removes 5-oxoproline from various penultimate amino acid residues except L-proline. This chain is Pyrrolidone-carboxylate peptidase, found in Staphylococcus aureus (strain bovine RF122 / ET3-1).